The following is a 143-amino-acid chain: Histone H2A.z (143 aa).

The protein belongs to the histone H2A family. In terms of assembly, the nucleosome is a histone octamer containing two molecules each of H2A, H2B, H3 and H4 assembled in one H3-H4 heterotetramer and two H2A-H2B heterodimers. The octamer wraps approximately 147 bp of DNA.

The protein resides in the nucleus. The protein localises to the chromosome. In terms of biological role, core component of nucleosome which plays a central role in DNA double strand break (DSB) repair. Nucleosomes wrap and compact DNA into chromatin, limiting DNA accessibility to the cellular machineries which require DNA as a template. Histones thereby play a central role in transcription regulation, DNA repair, DNA replication and chromosomal stability. DNA accessibility is regulated via a complex set of post-translational modifications of histones, also called histone code, and nucleosome remodeling. The polypeptide is Histone H2A.z (H2AZ) (Dictyostelium discoideum (Social amoeba)).